The chain runs to 558 residues: Alpha-1,3-mannosyltransferase MNT2 (558 aa).

Over 1-6 (MRRKNR) the chain is Cytoplasmic. A helical; Signal-anchor for type II membrane protein transmembrane segment spans residues 7 to 27 (LFILVVLLGIVLVVYYSQLNS). Topologically, residues 28–558 (LDLVEPVQSS…QIVDIWNKDI (531 aa)) are lumenal. Asparagine 187 is a glycosylation site (N-linked (GlcNAc...) asparagine).

Belongs to the MNN1/MNT family.

It localises to the golgi apparatus membrane. It participates in protein modification; protein glycosylation. Mannosyltransferase involved in adding the 4th and 5th mannose residues of O-linked glycans. The sequence is that of Alpha-1,3-mannosyltransferase MNT2 (MNT2) from Saccharomyces cerevisiae (strain ATCC 204508 / S288c) (Baker's yeast).